The primary structure comprises 390 residues: 2-oxoisovalerate dehydrogenase subunit beta, mitochondrial (390 aa).

The N-terminal 48 residues, 1–48 (MAAVAARAGGLLRLGAAGAERRRRGLRCAALVQGFLQPAVDDASQKRR), are a transit peptide targeting the mitochondrion. Residue Y150 participates in thiamine diphosphate binding. Positions 176, 178, 179, 226, and 229 each coordinate K(+). K230 is modified (N6-acetyllysine). Residue N231 coordinates K(+). An N6-acetyllysine modification is found at K239.

In terms of assembly, heterotetramer of 2 alpha/BCKDHA and 2 beta chains/BCKDHB that forms the branched-chain alpha-keto acid decarboxylase (E1) component of the BCKD complex. The branched-chain alpha-ketoacid dehydrogenase is a large complex composed of three major building blocks E1, E2 and E3. It is organized around E2, a 24-meric cubic core composed of DBT, to which are associated 6 to 12 copies of E1, and approximately 6 copies of the dehydrogenase E3, a DLD dimer. It depends on thiamine diphosphate as a cofactor.

The protein localises to the mitochondrion matrix. It catalyses the reaction N(6)-[(R)-lipoyl]-L-lysyl-[protein] + 3-methyl-2-oxobutanoate + H(+) = N(6)-[(R)-S(8)-2-methylpropanoyldihydrolipoyl]-L-lysyl-[protein] + CO2. In terms of biological role, together with BCKDHA forms the heterotetrameric E1 subunit of the mitochondrial branched-chain alpha-ketoacid dehydrogenase (BCKD) complex. The BCKD complex catalyzes the multi-step oxidative decarboxylation of alpha-ketoacids derived from the branched-chain amino-acids valine, leucine and isoleucine producing CO2 and acyl-CoA which is subsequently utilized to produce energy. The E1 subunit catalyzes the first step with the decarboxylation of the alpha-ketoacid forming an enzyme-product intermediate. A reductive acylation mediated by the lipoylamide cofactor of E2 extracts the acyl group from the E1 active site for the next step of the reaction. This Rattus norvegicus (Rat) protein is 2-oxoisovalerate dehydrogenase subunit beta, mitochondrial.